An 88-amino-acid chain; its full sequence is Putative regulatory protein AM1_5498 (88 aa).

This sequence belongs to the RemA family.

This Acaryochloris marina (strain MBIC 11017) protein is Putative regulatory protein AM1_5498.